We begin with the raw amino-acid sequence, 194 residues long: ATP-dependent Clp protease proteolytic subunit (194 aa).

The active-site Nucleophile is S98. H123 is an active-site residue.

Belongs to the peptidase S14 family. Fourteen ClpP subunits assemble into 2 heptameric rings which stack back to back to give a disk-like structure with a central cavity, resembling the structure of eukaryotic proteasomes.

The protein localises to the cytoplasm. It carries out the reaction Hydrolysis of proteins to small peptides in the presence of ATP and magnesium. alpha-casein is the usual test substrate. In the absence of ATP, only oligopeptides shorter than five residues are hydrolyzed (such as succinyl-Leu-Tyr-|-NHMec, and Leu-Tyr-Leu-|-Tyr-Trp, in which cleavage of the -Tyr-|-Leu- and -Tyr-|-Trp bonds also occurs).. Its function is as follows. Cleaves peptides in various proteins in a process that requires ATP hydrolysis. Has a chymotrypsin-like activity. Plays a major role in the degradation of misfolded proteins. This Clostridium botulinum (strain Hall / ATCC 3502 / NCTC 13319 / Type A) protein is ATP-dependent Clp protease proteolytic subunit.